A 308-amino-acid polypeptide reads, in one-letter code: Homeobox protein abdominal-A homolog (308 aa).

Positions 138-197 (RRRGRQTYTRFQTLELEKEFHFNHYLTRRRRIEIAHALCLTERQIKIWFQNRRMKLKKEL) form a DNA-binding region, homeobox. Basic and acidic residues predominate over residues 207–221 (ARREREEQDKMKNES). A disordered region spans residues 207–277 (ARREREEQDK…SGNLGSHLHH (71 aa)). Residues 223-247 (KSAQQHHSQKQAQQEHTVVGSQQTS) are compositionally biased toward low complexity. Gly residues predominate over residues 248 to 269 (NGGGTGGGTGGSGGAGSGGSSG).

This sequence belongs to the Antp homeobox family.

The protein localises to the nucleus. Functionally, sequence-specific transcription factor which is part of a developmental regulatory system that provides cells with specific positional identities on the anterior-posterior axis. The protein is Homeobox protein abdominal-A homolog of Anopheles gambiae (African malaria mosquito).